Reading from the N-terminus, the 781-residue chain is Probable aminopeptidase 2 (781 aa).

Substrate contacts are provided by residues Glu-105 and 237–241; that span reads GAMEN. His-272 is a Zn(2+) binding site. Glu-273 serves as the catalytic Proton acceptor. Zn(2+) contacts are provided by His-276 and Glu-295.

Belongs to the peptidase M1 family. The cofactor is Zn(2+).

It localises to the cytoplasm. The protein is Probable aminopeptidase 2 (ape2) of Sulfurisphaera tokodaii (strain DSM 16993 / JCM 10545 / NBRC 100140 / 7) (Sulfolobus tokodaii).